We begin with the raw amino-acid sequence, 552 residues long: Polypeptide N-acetylgalactosaminyltransferase 14 (552 aa).

The Cytoplasmic segment spans residues 1–6 (MRRLTR). The helical; Signal-anchor for type II membrane protein transmembrane segment at 7-26 (RLVLPVFGVLWITVLLFFWV) threads the bilayer. Over 27–552 (TKRKLEVPTG…MSQHWDMVSS (526 aa)) the chain is Lumenal. Intrachain disulfides connect Cys101–Cys328, Cys319–Cys397, Cys430–Cys449, Cys476–Cys493, and Cys517–Cys538. Residues 110–215 (LPPTSIIITF…RDWLQPLLHR (106 aa)) are catalytic subdomain A. Residues Asp151 and Arg176 each coordinate substrate. Asp199 provides a ligand contact to Mn(2+). Ser200 is a binding site for substrate. Residue His201 participates in Mn(2+) binding. The interval 274-336 (PIRTPIIAGG…PCSRVGHVFR (63 aa)) is catalytic subdomain B. Trp305 is a substrate binding site. Mn(2+) is bound at residue His333. Residues Arg336, His339, and Tyr341 each contribute to the substrate site. A Ricin B-type lectin domain is found at 415-550 (KESSIQKGNI…SLMSQHWDMV (136 aa)).

It belongs to the glycosyltransferase 2 family. GalNAc-T subfamily. Mn(2+) serves as cofactor. In terms of tissue distribution, detected in renal tubules (at protein level). Highly expressed in fetal and adult kidney. Widely expressed at low level. Weakly expressed in whole brain, cerebellum, thymus, lung, mammary gland, liver, stomach, small intestine, colon, pancreas, spleen, bladder, uterus, placenta, testis, ovary, skeletal muscle, leukocyte, B-cell, bone marrow, fetal brain, fetal thymus, fetal lung, fetal liver, fetal small intestine, fetal spleen, fetal skeletal and fetus. Detected in renal tubules (at protein level).

The protein localises to the golgi apparatus membrane. It catalyses the reaction L-seryl-[protein] + UDP-N-acetyl-alpha-D-galactosamine = a 3-O-[N-acetyl-alpha-D-galactosaminyl]-L-seryl-[protein] + UDP + H(+). The catalysed reaction is L-threonyl-[protein] + UDP-N-acetyl-alpha-D-galactosamine = a 3-O-[N-acetyl-alpha-D-galactosaminyl]-L-threonyl-[protein] + UDP + H(+). It functions in the pathway protein modification; protein glycosylation. Its function is as follows. Catalyzes the initial reaction in O-linked oligosaccharide biosynthesis, the transfer of an N-acetyl-D-galactosamine residue to a serine or threonine residue on the protein receptor. Displays activity toward mucin-derived peptide substrates such as Muc2, Muc5AC, Muc7, and Muc13 (-58). May be involved in O-glycosylation in kidney. This Homo sapiens (Human) protein is Polypeptide N-acetylgalactosaminyltransferase 14 (GALNT14).